A 267-amino-acid chain; its full sequence is 4-hydroxy-tetrahydrodipicolinate reductase (267 aa).

NAD(+) contacts are provided by residues 8–13 and Asp34; that span reads GAAGRM. Residue Arg35 participates in NADP(+) binding. Residues 98 to 100 and 122 to 125 each bind NAD(+); these read GTT and AANF. Catalysis depends on His155, which acts as the Proton donor/acceptor. A (S)-2,3,4,5-tetrahydrodipicolinate-binding site is contributed by His156. The Proton donor role is filled by Lys159. Position 165-166 (165-166) interacts with (S)-2,3,4,5-tetrahydrodipicolinate; that stretch reads GT.

The protein belongs to the DapB family.

The protein localises to the cytoplasm. The catalysed reaction is (S)-2,3,4,5-tetrahydrodipicolinate + NAD(+) + H2O = (2S,4S)-4-hydroxy-2,3,4,5-tetrahydrodipicolinate + NADH + H(+). It carries out the reaction (S)-2,3,4,5-tetrahydrodipicolinate + NADP(+) + H2O = (2S,4S)-4-hydroxy-2,3,4,5-tetrahydrodipicolinate + NADPH + H(+). Its pathway is amino-acid biosynthesis; L-lysine biosynthesis via DAP pathway; (S)-tetrahydrodipicolinate from L-aspartate: step 4/4. Functionally, catalyzes the conversion of 4-hydroxy-tetrahydrodipicolinate (HTPA) to tetrahydrodipicolinate. The polypeptide is 4-hydroxy-tetrahydrodipicolinate reductase (Pseudomonas savastanoi pv. phaseolicola (strain 1448A / Race 6) (Pseudomonas syringae pv. phaseolicola (strain 1448A / Race 6))).